Here is a 70-residue protein sequence, read N- to C-terminus: Small ribosomal subunit protein bS21 (70 aa).

It belongs to the bacterial ribosomal protein bS21 family.

The polypeptide is Small ribosomal subunit protein bS21 (Sulfurovum sp. (strain NBC37-1)).